The primary structure comprises 491 residues: MAALDSEGDAQKLRFGPWLLNAVSSGLYRGLCWIDPDRRIFRIPWKHNARKDVTSSDVEIFKAWAKASGRYEGNAEDPAKWKTNFRCALRSTHMFMLLEDRSKCNDDPHKVYAVASGVPNDRGSGGPVAGALQQQPQLLLNHHDLALENTPTDSTEGVAAAALTQVDLDLLQSVLQHCNISALGSQPTLWAHTGDALPEDALLLPGQDGCLPGPQFQDWRQLEEPLLLGNQPLTGGGCGQDGAGALPVSEECAIPAPSPAEELLFQSANPAPPPPAGDIGGLPPLLDITIYYRGKMVYQEQVDDSRCVLAYQPLDPAVAEQRLVLFPSPASLPDPRQRRYTEDLLEVAGLRLEQRAGQLLATRLKKCKVFWALSQQLEGGEPPLNLLHRDQETTIFDFRVFCTELRDFRDSRRERSPDFTIFLCFGQCFSSTKPKESKLILVKLVPQFCEYWYEQVQRGGASSLNSGNVSLQLSDSFNLFELIEQYHMQTD.

Residues 12–116 (KLRFGPWLLN…DPHKVYAVAS (105 aa)) constitute a DNA-binding region (IRF tryptophan pentad repeat).

The protein belongs to the IRF family. As to expression, widely expressed with higher expression in lung, spleen and intestine.

The protein localises to the cytoplasm. It is found in the nucleus. Its function is as follows. Key transcriptional regulator of type I interferon (IFN)-dependent immune responses which plays a critical role in the innate immune response against DNA and RNA viruses. Regulates the transcription of type I IFN genes (IFN-alpha and IFN-beta) and IFN-stimulated genes (ISG) by binding to an interferon-stimulated response element (ISRE) in their promoters. May activate transcription by complex formation with other transcriptional factors, possibly members of the STAT family. Binds specifically to the IFN-stimulated response element (ISRE) but not to the IRF-1 binding site PRD-I. In Gallus gallus (Chicken), this protein is Interferon regulatory factor 3 (IRF3).